The chain runs to 1081 residues: MPRRKQEQPKRLPSHVSRQEEAEGELSEGEHWYGNSSETPSEASFGEVQENYKLSLEDRIQEQSTSPDTSLGSTTPSSHTLELVALDGEVLRDSLQCQDHLSPGVSSLCDDDPGSNKPLSSNLRRLLEAGSLKLDAVATANGRVESPVNVGSNLSFSPPSHHAQQLSVLARKLAEKQEQNDQYTPSNRFIWNQGKWLPNSTTTCSLSPDSAILKLKAAANAVLQDKSLTRTEETMRFESFSSPFSSQSASSTLAALSKKVSERSLTPGQEHPPPASSFLSLAPMTSSAALLKEVAARAAGSLLAEKSSLLPEDPLPPPPSEKKPEKVSPPPPPPPPPPPPPPPQSLELLLLPVPKGRVSKPSNSASEEESGKPFQCPICGLVIKRKSYWKRHMVIHTGLKSHQCPLCPFRCARKDNLKSHMKVHQHQDRGETFQCQLCPFTSSRHFSLKLHMRCHQHFLRTEAKVKEEIPDPDVKGSPHLSDSACLGQQREGGGTELVGTMMTSNTPERTSQGGAGVSPLLVKEEPKEDNGLPTSFTLNTADRPANHTKLKDPSEYVANSASALFSQDISVKMASDFLMKLSAANQKEPMNLNFKVKEEPKEGESLSTTLPRSSYVFSPESEVSTPGVSEDALKPQEGKGNVLRRDVSVKAASELLMKLSAESYKETQMVKIKEEPMEVDIQDSHVSISPSRNVGYSTLIGREKTEPLQKMPEGRVPPERNLFSQDISVKMASELLFQLSEKVSKEHNHTKENTIRTTTSPFFSEDTFRQSPFTSNSKELLPSESVLHGRISAPETEKIVLEAGNGLPSWKFNDQLFPCDVCGKVFGRQQTLSRHLSLHTEERKYKCHLCPYAAKCRANLNQHLTVHSVKLVSTDTEDIVSAVTSEGSDGKKHPYYYSCHVCGFETELNVQFVSHMSLHVDKEQWMFSICCTACDFVTMEEAEIKTHIGTKHTGEDRKTPSESNSPSSSSLSALSDSANSKDDSDGSQKNKGGNNLLVVSVMPGSQPSLNSEEKPEKGFECVFCNFVCKTKNMFERHLQIHLITRMFECDVCHKFMKTPEQLLEHKKCHTVPTGGLNSGQW.

Positions 1-10 are enriched in basic and acidic residues; that stretch reads MPRRKQEQPK. The tract at residues 1–14 is mediates direct interaction with RBBP4; it reads MPRRKQEQPKRLPS. The interval 1–77 is disordered; sequence MPRRKQEQPK…DTSLGSTTPS (77 aa). An RRK motif; mediates NuRD recruitment to telomeres motif is present at residues 3-5; it reads RRK. Residues 62 to 77 show a composition bias toward polar residues; the sequence is EQSTSPDTSLGSTTPS. Residues Lys176, Lys216, and Lys226 each participate in a glycyl lysine isopeptide (Lys-Gly) (interchain with G-Cter in SUMO2) cross-link. Disordered regions lie at residues 258–280 and 305–348; these read KKVSERSLTPGQEHPPPASSFLS and EKSS…SLEL. Residues 327 to 344 show a composition bias toward pro residues; the sequence is VSPPPPPPPPPPPPPPPQ. Residues Lys360 and Lys372 each participate in a glycyl lysine isopeptide (Lys-Gly) (interchain with G-Cter in SUMO2) cross-link. 3 consecutive C2H2-type zinc fingers follow at residues 374–396, 402–424, and 433–455; these read FQCPICGLVIKRKSYWKRHMVIH, HQCPLCPFRCARKDNLKSHMKVH, and FQCQLCPFTSSRHFSLKLHMRCH. Glycyl lysine isopeptide (Lys-Gly) (interchain with G-Cter in SUMO2) cross-links involve residues Lys466, Lys475, Lys523, Lys549, Lys580, Lys587, and Lys597. The disordered stretch occupies residues 525–553; it reads EPKEDNGLPTSFTLNTADRPANHTKLKDP. Residues 616 to 627 are compositionally biased toward polar residues; it reads VFSPESEVSTPG. The interval 616-640 is disordered; it reads VFSPESEVSTPGVSEDALKPQEGKG. Positions 631–640 are enriched in basic and acidic residues; that stretch reads DALKPQEGKG. Residues Lys634, Lys639, and Lys658 each participate in a glycyl lysine isopeptide (Lys-Gly) (interchain with G-Cter in SUMO2) cross-link. Lys673 participates in a covalent cross-link: Glycyl lysine isopeptide (Lys-Gly) (interchain with G-Cter in SUMO1); alternate. A Glycyl lysine isopeptide (Lys-Gly) (interchain with G-Cter in SUMO2); alternate cross-link involves residue Lys673. Glycyl lysine isopeptide (Lys-Gly) (interchain with G-Cter in SUMO2) cross-links involve residues Lys704, Lys710, Lys742, Lys778, and Lys798. 2 consecutive C2H2-type zinc fingers follow at residues 817–839 and 845–867; these read FPCDVCGKVFGRQQTLSRHLSLH and YKCHLCPYAAKCRANLNQHLTVH. Glycyl lysine isopeptide (Lys-Gly) (interchain with G-Cter in SUMO2) cross-links involve residues Lys870 and Lys891. C2H2-type zinc fingers lie at residues 897–919 and 929–952; these read YSCHVCGFETELNVQFVSHMSLH and ICCTACDFVTMEEAEIKTHIGTKH. Residues 947–960 are compositionally biased toward basic and acidic residues; sequence HIGTKHTGEDRKTP. Residues 947–1013 form a disordered region; it reads HIGTKHTGED…GSQPSLNSEE (67 aa). Lys958 participates in a covalent cross-link: Glycyl lysine isopeptide (Lys-Gly) (interchain with G-Cter in SUMO2). Positions 961-978 are enriched in low complexity; that stretch reads SESNSPSSSSLSALSDSA. Positions 979 to 988 are enriched in basic and acidic residues; that stretch reads NSKDDSDGSQ. Lys1014 is covalently cross-linked (Glycyl lysine isopeptide (Lys-Gly) (interchain with G-Cter in SUMO2)). C2H2-type zinc fingers lie at residues 1019–1041 and 1047–1069; these read FECVFCNFVCKTKNMFERHLQIH and FECDVCHKFMKTPEQLLEHKKCH.

It belongs to the krueppel C2H2-type zinc-finger protein family. In terms of assembly, part of a transcription inhibitory ribonucleoprotein complex composed at least of the circular RNA circZNF827, HNRNPK and HNRNPL. Interacts with the nucleosome remodeling and histone deacetylase/NuRD complex. Interacts with RBBP4; the interaction is direct and recruits RBBP4, a component of the NuRD complex, to telomeres.

The protein localises to the nucleus. It localises to the chromosome. It is found in the telomere. Functionally, as part of a ribonucleoprotein complex composed at least of HNRNPK, HNRNPL and the circular RNA circZNF827 that nucleates the complex on chromatin, may negatively regulate the transcription of genes involved in neuronal differentiation. Could also recruit the nucleosome remodeling and histone deacetylase/NuRD complex to telomeric regions of chromosomes to regulate chromatin remodeling as part of telomere maintenance. This is Zinc finger protein 827 (ZNF827) from Macaca fascicularis (Crab-eating macaque).